A 398-amino-acid chain; its full sequence is Phosphomevalonate dehydratase large subunit (398 aa).

(R)-5-phosphomevalonate is bound by residues G48, V49, S50, N76, and P77. Position 116 (C116) interacts with [4Fe-4S] cluster. (R)-5-phosphomevalonate contacts are provided by E136 and S137. Residues C287 and C342 each contribute to the [4Fe-4S] cluster site. K361 contributes to the (R)-5-phosphomevalonate binding site.

This sequence belongs to the AcnX type II large subunit family. In terms of assembly, heterodimer composed of a large subunit (PMDh-L) and a small subunit (PMDh-S). [4Fe-4S] cluster serves as cofactor.

It carries out the reaction (R)-5-phosphomevalonate = (2E)-3-methyl-5-phosphooxypent-2-enoate + H2O. It functions in the pathway isoprenoid biosynthesis; isopentenyl diphosphate biosynthesis via mevalonate pathway. Its function is as follows. Component of a hydro-lyase that catalyzes the dehydration of mevalonate 5-phosphate (MVA5P) to form trans-anhydromevalonate 5-phosphate (tAHMP). Involved in the archaeal mevalonate (MVA) pathway, which provides fundamental precursors for isoprenoid biosynthesis, such as isopentenyl diphosphate (IPP) and dimethylallyl diphosphate (DMAPP). This chain is Phosphomevalonate dehydratase large subunit, found in Methanosarcina mazei (strain ATCC BAA-159 / DSM 3647 / Goe1 / Go1 / JCM 11833 / OCM 88) (Methanosarcina frisia).